A 292-amino-acid polypeptide reads, in one-letter code: 4-hydroxy-tetrahydrodipicolinate synthase (292 aa).

T45 lines the pyruvate pocket. Y133 serves as the catalytic Proton donor/acceptor. K161 functions as the Schiff-base intermediate with substrate in the catalytic mechanism. I203 is a binding site for pyruvate.

Belongs to the DapA family. As to quaternary structure, homotetramer; dimer of dimers.

The protein resides in the cytoplasm. The enzyme catalyses L-aspartate 4-semialdehyde + pyruvate = (2S,4S)-4-hydroxy-2,3,4,5-tetrahydrodipicolinate + H2O + H(+). It participates in amino-acid biosynthesis; L-lysine biosynthesis via DAP pathway; (S)-tetrahydrodipicolinate from L-aspartate: step 3/4. Catalyzes the condensation of (S)-aspartate-beta-semialdehyde [(S)-ASA] and pyruvate to 4-hydroxy-tetrahydrodipicolinate (HTPA). In Shigella boydii serotype 18 (strain CDC 3083-94 / BS512), this protein is 4-hydroxy-tetrahydrodipicolinate synthase.